The chain runs to 294 residues: Eukaryotic translation initiation factor 3 subunit F (294 aa).

Residues Val7–Gly155 enclose the MPN domain.

The protein belongs to the eIF-3 subunit F family. As to quaternary structure, component of the eukaryotic translation initiation factor 3 (eIF-3) complex.

It localises to the cytoplasm. Functionally, component of the eukaryotic translation initiation factor 3 (eIF-3) complex, which is involved in protein synthesis of a specialized repertoire of mRNAs and, together with other initiation factors, stimulates binding of mRNA and methionyl-tRNAi to the 40S ribosome. The eIF-3 complex specifically targets and initiates translation of a subset of mRNAs involved in cell proliferation. The protein is Eukaryotic translation initiation factor 3 subunit F of Caenorhabditis elegans.